The following is a 162-amino-acid chain: uncharacterized protein (162 aa).

This is an uncharacterized protein from Aedes vexans (Inland floodwater mosquito).